The sequence spans 837 residues: Tuftelin-interacting protein 11 (837 aa).

2 stretches are compositionally biased toward basic and acidic residues: residues Met1–Arg13 and Val53–Pro64. 3 disordered regions span residues Met1–Arg21, Val53–Arg72, and Leu85–Ala133. Positions Met1–Thr50 are required for interaction with DHX15. Phosphoserine is present on residues Ser2, Ser59, and Ser98. The span at Glu91 to Glu102 shows a compositional bias: acidic residues. Over residues Arg103 to Pro116 the composition is skewed to basic and acidic residues. Ser144 carries the post-translational modification Phosphoserine. Residues Thr149–Ser195 form the G-patch domain. The interval Ile179 to Pro236 is disordered. Residue Ser210 is modified to Phosphoserine. Over residues Glu217 to Gly231 the composition is skewed to basic and acidic residues. The short motif at Val700–Asn705 is the Nuclear localization signal element. Residues Ile710–Leu734 form a required for nuclear speckle localization region.

It belongs to the TFP11/STIP family. Identified in the spliceosome C complex. Found in the Intron Large (IL) complex, a post-mRNA release spliceosomal complex containing the excised intron, U2, U5 and U6 snRNPs, and splicing factors. Interacts with TUFT1. Interacts with DHX15; indicative for a recruitment of DHX15 to the IL complex. Interacts with GCFC2.

Its subcellular location is the cytoplasm. It localises to the nucleus. Involved in pre-mRNA splicing, specifically in spliceosome disassembly during late-stage splicing events. Intron turnover seems to proceed through reactions in two lariat-intron associated complexes termed Intron Large (IL) and Intron Small (IS). In cooperation with DHX15 seems to mediate the transition of the U2, U5 and U6 snRNP-containing IL complex to the snRNP-free IS complex leading to efficient debranching and turnover of excised introns. May play a role in the differentiation of ameloblasts and odontoblasts or in the forming of the enamel extracellular matrix. The polypeptide is Tuftelin-interacting protein 11 (TFIP11) (Macaca mulatta (Rhesus macaque)).